We begin with the raw amino-acid sequence, 187 residues long: UPF0301 protein YqgE (187 aa).

The protein belongs to the UPF0301 (AlgH) family.

The polypeptide is UPF0301 protein YqgE (Salmonella paratyphi B (strain ATCC BAA-1250 / SPB7)).